The primary structure comprises 84 residues: Small ribosomal subunit protein eS27 (84 aa).

A compositionally biased stretch (basic and acidic residues) spans 1–16 (MPLAKDLLHPSPEEEK). Residues 1 to 23 (MPLAKDLLHPSPEEEKRKHKKKR) form a disordered region. Residue Ser-11 is modified to Phosphoserine. The C4-type zinc finger occupies 38 to 60 (PGCYKITTVFSHAQTVVLCVGCS).

It belongs to the eukaryotic ribosomal protein eS27 family. Component of the small ribosomal subunit. Part of the small subunit (SSU) processome, composed of more than 70 proteins and the RNA chaperone small nucleolar RNA (snoRNA) U3. The cofactor is Zn(2+).

It localises to the cytoplasm. The protein resides in the nucleus. The protein localises to the nucleolus. Functionally, component of the small ribosomal subunit. The ribosome is a large ribonucleoprotein complex responsible for the synthesis of proteins in the cell. Required for proper rRNA processing and maturation of 18S rRNAs. Part of the small subunit (SSU) processome, first precursor of the small eukaryotic ribosomal subunit. During the assembly of the SSU processome in the nucleolus, many ribosome biogenesis factors, an RNA chaperone and ribosomal proteins associate with the nascent pre-rRNA and work in concert to generate RNA folding, modifications, rearrangements and cleavage as well as targeted degradation of pre-ribosomal RNA by the RNA exosome. This is Small ribosomal subunit protein eS27 from Mus musculus (Mouse).